The following is a 308-amino-acid chain: UDP-N-acetylenolpyruvoylglucosamine reductase 2 (308 aa).

One can recognise an FAD-binding PCMH-type domain in the interval 31 to 197 (RIGGPADYLV…AEVVMALRPA (167 aa)). Arg176 is a catalytic residue. Ser226 serves as the catalytic Proton donor. Residue Glu296 is part of the active site.

This sequence belongs to the MurB family. It depends on FAD as a cofactor.

Its subcellular location is the cytoplasm. The catalysed reaction is UDP-N-acetyl-alpha-D-muramate + NADP(+) = UDP-N-acetyl-3-O-(1-carboxyvinyl)-alpha-D-glucosamine + NADPH + H(+). It functions in the pathway cell wall biogenesis; peptidoglycan biosynthesis. In terms of biological role, cell wall formation. In Symbiobacterium thermophilum (strain DSM 24528 / JCM 14929 / IAM 14863 / T), this protein is UDP-N-acetylenolpyruvoylglucosamine reductase 2.